The following is a 105-amino-acid chain: Large ribosomal subunit protein uL24 (105 aa).

Belongs to the universal ribosomal protein uL24 family. Part of the 50S ribosomal subunit.

Its function is as follows. One of two assembly initiator proteins, it binds directly to the 5'-end of the 23S rRNA, where it nucleates assembly of the 50S subunit. One of the proteins that surrounds the polypeptide exit tunnel on the outside of the subunit. The polypeptide is Large ribosomal subunit protein uL24 (Vibrio campbellii (strain ATCC BAA-1116)).